Consider the following 651-residue polypeptide: L-aspartate oxidase, chloroplastic (651 aa).

Residues 1-74 (MAAHVSTGNI…PISETSKPIR (74 aa)) constitute a chloroplast transit peptide. Residues 92–95 (SGVA), K114, 121–128 (NTNYAQGG), and D292 each bind FAD. The active-site Proton donor/acceptor is the R368. Residues E453 and 469–470 (SL) each bind FAD.

The protein belongs to the FAD-dependent oxidoreductase 2 family. NadB subfamily. Interacts in vitro with QS. Requires FAD as cofactor.

The protein localises to the plastid. It localises to the chloroplast. The enzyme catalyses L-aspartate + O2 = iminosuccinate + H2O2. Its pathway is cofactor biosynthesis; NAD(+) biosynthesis; iminoaspartate from L-aspartate (oxidase route): step 1/1. In terms of biological role, catalyzes the oxidation of L-aspartate to iminoaspartate. Can complement nadB-deficient E.coli mutant. Plays a role in stomatal immunity. The protein is L-aspartate oxidase, chloroplastic of Arabidopsis thaliana (Mouse-ear cress).